A 360-amino-acid polypeptide reads, in one-letter code: Methylthioribose-1-phosphate isomerase (360 aa).

Asp252 functions as the Proton donor in the catalytic mechanism.

This sequence belongs to the eIF-2B alpha/beta/delta subunits family. MtnA subfamily.

It is found in the cytoplasm. The protein resides in the nucleus. The catalysed reaction is 5-(methylsulfanyl)-alpha-D-ribose 1-phosphate = 5-(methylsulfanyl)-D-ribulose 1-phosphate. It participates in amino-acid biosynthesis; L-methionine biosynthesis via salvage pathway; L-methionine from S-methyl-5-thio-alpha-D-ribose 1-phosphate: step 1/6. In terms of biological role, catalyzes the interconversion of methylthioribose-1-phosphate (MTR-1-P) into methylthioribulose-1-phosphate (MTRu-1-P). In Trichoplax adhaerens (Trichoplax reptans), this protein is Methylthioribose-1-phosphate isomerase.